The chain runs to 239 residues: tRNA (guanine-N(7)-)-methyltransferase (239 aa).

S-adenosyl-L-methionine is bound by residues Glu-69, Glu-94, Asp-121, and Asp-144. Asp-144 is a catalytic residue. Lys-148 serves as a coordination point for substrate. Residues 150–155 (RHNKRR) are interaction with RNA. Substrate is bound by residues Asp-180 and 217 to 220 (TKFE).

Belongs to the class I-like SAM-binding methyltransferase superfamily. TrmB family. Monomer.

The enzyme catalyses guanosine(46) in tRNA + S-adenosyl-L-methionine = N(7)-methylguanosine(46) in tRNA + S-adenosyl-L-homocysteine. Its pathway is tRNA modification; N(7)-methylguanine-tRNA biosynthesis. Catalyzes the formation of N(7)-methylguanine at position 46 (m7G46) in tRNA. The sequence is that of tRNA (guanine-N(7)-)-methyltransferase from Serratia proteamaculans (strain 568).